Consider the following 1513-residue polypeptide: Lid2 complex component lid2 (1513 aa).

In terms of domain architecture, JmjN spans 56 to 97; that stretch reads GLSVQLNASNMTDPFKFLLDNWHTIFKNGAIKLLPPEGWQIP. In terms of domain architecture, ARID spans 121 to 212; it reads YEKNYDYFKK…YIKPFERDSS (92 aa). Residues 211-253 form a disordered region; that stretch reads SSPSFKSKRSESSTRKIRNTRSSAQQESPIPETSAQSPVQTIQ. Polar residues predominate over residues 230–253; it reads TRSSAQQESPIPETSAQSPVQTIQ. A PHD-type 1 zinc finger spans residues 268-318; sequence GEQCEYCGLDKNPETILLCDGCEAAYHTSCLDPPLTSIPKEDWYCDACKFN. The JmjC domain occupies 408–574; sequence KYSSEPWNLH…DGLLNSSISV (167 aa). Residue serine 722 is modified to Phosphoserine. The disordered stretch occupies residues 1063–1086; the sequence is LSLNDRPGPPMEPASRETSPDSEG. Over residues 1076-1086 the composition is skewed to basic and acidic residues; sequence ASRETSPDSEG. The PHD-type 2 zinc-finger motif lies at 1093 to 1145; sequence KKGCIFCFCRLPESGVMIECEICHEWYHAKCLKMSKKKLRQDEKFTCPICDYR. The segment at 1096-1143 adopts an RING-type 1; degenerate zinc-finger fold; it reads CIFCFCRLPESGVMIECEICHEWYHAKCLKMSKKKLRQDEKFTCPICD. Disordered regions lie at residues 1244-1268 and 1280-1327; these read APNP…RQRQ and ASAI…NNKN. Basic residues predominate over residues 1257 to 1268; sequence TRKPRPTKRQRQ. Residues 1301 to 1313 are compositionally biased toward basic and acidic residues; that stretch reads VEAETKSKSEKSP. Polar residues predominate over residues 1316–1326; it reads NGTNISDANNK. A PHD-type 3 zinc finger spans residues 1352–1403; sequence NSSCLCGEEFSPRDSFIDCTICERRFHYDCVGLNNEIADSVSKFTCPICMEQ. The RING-type 2; degenerate zinc finger occupies 1354–1401; that stretch reads SCLCGEEFSPRDSFIDCTICERRFHYDCVGLNNEIADSVSKFTCPICM.

Component of the Lid2 complex composed of ash2, jmj3, lid2, sdc1 and snt2.

The protein localises to the nucleus. In Schizosaccharomyces pombe (strain 972 / ATCC 24843) (Fission yeast), this protein is Lid2 complex component lid2 (lid2).